A 195-amino-acid chain; its full sequence is Imidazoleglycerol-phosphate dehydratase (195 aa).

Belongs to the imidazoleglycerol-phosphate dehydratase family.

It is found in the cytoplasm. The catalysed reaction is D-erythro-1-(imidazol-4-yl)glycerol 3-phosphate = 3-(imidazol-4-yl)-2-oxopropyl phosphate + H2O. Its pathway is amino-acid biosynthesis; L-histidine biosynthesis; L-histidine from 5-phospho-alpha-D-ribose 1-diphosphate: step 6/9. This is Imidazoleglycerol-phosphate dehydratase from Cupriavidus pinatubonensis (strain JMP 134 / LMG 1197) (Cupriavidus necator (strain JMP 134)).